We begin with the raw amino-acid sequence, 1608 residues long: MKNNNFRLSAAGKLAAALAIILAASAGAYAAEIVAANGANGPGVSTAATGAQVVDIVAPNGNGLSHNQYQDFNVNQPGAVLNNSREAGLSQLAGQLGANPNLGGREASVILNEVIGRNPSLLHGQQEIFGMAADYVLANPNGISCQSCGFINTSHSSLVVGNPLVENGVLQGYSTFGNRNTLSLNGTLNAGGVLDLIAPKIDSRGEVIVQDFKQSNGKVTSAAINAISGLNRVARDGTVQASQQMPTALDSYYLGSMQAGRINIINTAQGSGVKLAGSLNAGDELKVKAYDIRSESRVDDASSNKNGGDNYQNYRGGIYVNDRSSSQTLTRTELKGKNISLVADNHAHLTATDIRGEDITLQGGKLTLDGQQLKQTQGHTDDRWFYSWQYDVTREREQLQQAGSTVAASGSAKLISTQEDVKLLGANVSADRALSVKAARDVHLAGLVEKDKSSERGYQRNHTSSLRTGRWSNSDESESLKASELRSEGELTLKAGRNVSTQGAKVHAQRDLTIDADNQIQVGVQKTANAKAVRDDKTSWGGIGGGDNKNNSNRREISHASELTSGGTLRLNGQQGVTITGSKARGQKGGEVTATHGGLRIDNALSTTVDKIDARTGTAFNITSSSHKADNSYQSSTASELKSDTNLTLVSHKDADVIGSQVASGGELSVESKTGNINVKAAERQQNIDEQKTALTVNGYAKEAGDKQYRAGLRIEHTRDSEKTTRTENSASSLSGGSVKLKAEKDVTFSGSKLVADKGDASVSGNKVSFLAADDKTASNTEQTKIGGGFYYTGGIDKLGSGVEAGYENNKTQAQSSKAITSGSDVKGNLTINARDKLTQQGAQHSVGGAYQENAAGVDHLAAADTASTTTTKTDVGVNIGANVDYSAVTRPVERAVGKAAKLDATGVINDIGGIGAPNVGLDIGAQGGSSEKRSSSSQAVVSSVQAGSIDINAKGEVRDQGTQYQASKGAVNLTADSHRSEAAANRQDEQSRDTRGSAGVRVYTTTGSDLTVDAKGEGGTQRSNSSASQAVTGSIDAANGINVNVKKDAIYQGTALNGGRGKTAVNAGGDIRLDQASDKQSESRSGFNVKASAKGGFTADSKNFGAGFGGGTHNGESSSSTAQVGNISGQQGVELKAGRDLTLQGTDVKSQGDVSLSAGNKVALQAAESTQTRKESKLSGNIDLGAGSSDSKEKTGGNLSAGGAFDIAKVNESATERQGATIASDGKVTLSANGKGDDALHLQGAKVSGGSAALEAKNGGILLESAKNEQHKDNWSLGIKANAKGGQTFNKDAGGKVDPNTGKDTHTLGAGLKVGVEQQDKTTHANTGITAGDVTLNSGKDTRLAGARVDADSVQGKVGGDLHVESRKDVENGVKVDVDAGLSHSNDPGSSITSKLSKVGTPRYAGKVKEKLEAGVNKVADATTDKYNSVARRLDPQQDTTGAVSFSKAEGKVTLPATPAGEKPQGPLWDRGARTVGGAVKDSITGPAGRQGHLKVNADVVNNNAVGEQSAIAGKNGVALQVGGQTQLTGGEIRSQQGKVELGGSQVSQQDVNGQRYQGGGRVDAAATVGGLLGGAAKQSVAGNVPFASGHASTQQADAKAGVFSGK.

The first 30 residues, 1-30 (MKNNNFRLSAAGKLAAALAIILAASAGAYA), serve as a signal peptide directing secretion. 6 disordered regions span residues 296 to 315 (SRVD…QNYR), 452 to 488 (KSSE…LRSE), 716 to 737 (EHTR…LSGG), 971 to 1030 (AVNL…SASQ), 1168 to 1199 (AEST…TGGN), and 1437 to 1469 (PQQD…QGPL). 2 stretches are compositionally biased toward polar residues: residues 303–313 (SNKNGGDNYQN) and 460–474 (RNHT…WSNS). Composition is skewed to basic and acidic residues over residues 478–488 (ESLKASELRSE) and 716–726 (EHTRDSEKTTR). Residues 727 to 736 (TENSASSLSG) show a composition bias toward polar residues. Over residues 977-996 (DSHRSEAAANRQDEQSRDTR) the composition is skewed to basic and acidic residues. Over residues 1021–1030 (TQRSNSSASQ) the composition is skewed to polar residues.

The protein localises to the cell outer membrane. Functionally, bacterial hemolysins are exotoxins that attack blood cell membranes and cause cell rupture by mechanisms not clearly defined. Its function is as follows. Cell-bound hemolysin, which releases heme-iron from erythrocytes by interaction with the erythrocyte membrane. ShlA requires ShlB function. In Serratia marcescens, this protein is Hemolysin (shlA).